Consider the following 846-residue polypeptide: MLFTVSCSKMSSIVDRDDSSIFDGLVEEDDKDKAKRVSRNKSEKKRRDQFNVLIKELGSMLPGNARKMDKSTVLQKSIDFLRKHKEITAQSDASEIRQDWKPTFLSNEEFTQLMLEALDGFFLAIMTDGSIIYVSESVTSLLEHLPSDLVDQSIFNFIPEGEHSEVYKILSTHLLESDSLTPEYLKSKNQLEFCCHMLRGTIDPKEPSTYEYVKFIGNFKSLNSVSSSAHNGFEGTIQRTHRPSYEDRVCFVATVRLATPQFIKEMCTVEEPNEEFTSRHSLEWKFLFLDHRAPPIIGYLPFEVLGTSGYDYYHVDDLENLAKCHEHLMQYGKGKSCYYRFLTKGQQWIWLQTHYYITYHQWNSRPEFIVCTHTVVSYAEVRAERRRELGIEESLPETAADKSQDSGSDNRINTVSLKEALERFDHSPTPSASSRSSRKSSHTAVSDPSSTPTKIPTDTSTPPRQHLPAHEKMVQRRSSFSSQSINSQSVGSSLTQPVMSQATNLPIPQGMSQFQFSAQLGAMQHLKDQLEQRTRMIEANIHRQQEELRKIQEQLQMVHGQGLQMFLQQSNPGLNFGSVQLSSGNSSNIQQLAPINMQGQVVPTNQIQSGMNTGHIGTTQHMIQQQTLQSTSTQSQQNVLSGHSQQTSLPSQTQSTLTAPLYNTMVISQPAAGSMVQIPSSMPQNSTQSAAVTTFTQDRQIRFSQGQQLVTKLVTAPVACGAVMVPSTMLMGQVVTAYPTFATQQQQSQTLSVTQQQQQQSSQEQQLTSVQQPSQAQLTQPPQQFLQTSRLLHGNPSTQLILSAAFPLQQSTFPQSHHQQHQSQQQQQLSRHRTDSLPDPSKVQPQ.

The Nuclear localization signal signature appears at 32–47 (DKAKRVSRNKSEKKRR). The bHLH domain occupies 34–84 (AKRVSRNKSEKKRRDQFNVLIKELGSMLPGNARKMDKSTVLQKSIDFLRKH). Phosphoserine is present on residues Ser38 and Ser42. Lys67 participates in a covalent cross-link: Glycyl lysine isopeptide (Lys-Gly) (interchain with G-Cter in SUMO1). 2 consecutive PAS domains span residues 107–177 (NEEF…LLES) and 262–332 (FIKE…MQYG). A PAC domain is found at 336-379 (SCYYRFLTKGQQWIWLQTHYYITYHQWNSRPEFIVCTHTVVSYA). The tract at residues 371–845 (CTHTVVSYAE…SLPDPSKVQP (475 aa)) is interaction with NR3C1. 2 disordered regions span residues 392 to 411 (EESL…SDNR) and 420 to 495 (ALER…SSLT). A Phosphoserine modification is found at Ser408. Ser427 is subject to Phosphoserine; by GSK3-beta. Position 431 is a phosphoserine (Ser431). Residues 447–463 (DPSSTPTKIPTDTSTPP) are compositionally biased toward polar residues. Positions 450–570 (STPTKIPTDT…QGLQMFLQQS (121 aa)) are interaction with SIRT1. Phosphothreonine; by CDK5 is present on residues Thr451 and Thr461. The span at 478–493 (SSFSSQSINSQSVGSS) shows a compositional bias: low complexity. An implicated in the circadian rhythmicity region spans residues 514–564 (FQFSAQLGAMQHLKDQLEQRTRMIEANIHRQQEELRKIQEQLQMVHGQGLQ). Low complexity-rich tracts occupy residues 624–637 (QQQT…QSQQ) and 644–654 (SQQTSLPSQTQ). Disordered stretches follow at residues 624-654 (QQQT…SQTQ), 764-783 (EQQL…QPPQ), and 811-846 (STFP…VQPQ). A compositionally biased stretch (low complexity) spans 811–829 (STFPQSHHQQHQSQQQQQL). Lys842 is covalently cross-linked (Glycyl lysine isopeptide (Lys-Gly) (interchain with G-Cter in SUMO1)).

Component of the circadian clock oscillator which includes the CRY proteins, CLOCK or NPAS2, BMAL1 or BMAL2, CSNK1D and/or CSNK1E, TIMELESS and the PER proteins. Interacts with KMT2A; in a circadian manner. Forms a heterodimer with BMAL1. The CLOCK-BMAL1 heterodimer is required for E-box-dependent transactivation, for CLOCK nuclear translocation and degradation, and for phosphorylation of both CLOCK and BMAL1. Interacts with NR3C1 in a ligand-dependent fashion. Interacts with ESR1 and estrogen stimulates this interaction. Interacts with the complex p35/CDK5. Interacts with RELA/p65. Interacts with KAT2B, CREBBP, EP300. Interacts with ID1 and ID3. Interacts with ID2. Interacts with MTA1. Interacts with OGA. Interacts with SIRT1. Interacts with CIPC. Interacts with EZH2. Interacts with EIF4E, PIWIL1 and DDX4. Interacts with PER2 and CRY1 and the interaction with PER and CRY proteins requires translocation to the nucleus. Interacts with PER1 and CRY2. Interaction of the CLOCK-BMAL1 heterodimer with PER or CRY inhibits transcription activation. Interaction of the CLOCK-BMAL1 with CRY1 is independent of DNA but with PER2 is off DNA. The CLOCK-BMAL1 heterodimer interacts with GSK3B. Interacts with KDM5A. Interacts with MYBBP1A. Interacts with THRAP3. Interacts with MED1; this interaction requires the presence of THRAP3. Interacts with NCOA2. The CLOCK-BMAL1 heterodimer interacts with PASD1. Interacts with ASS1 and IMPDH2; in a circadian manner. Interacts with NDUFA9. Interacts with PIWIL2 (via PIWI domain). Interacts with HNF4A. Post-translationally, ubiquitinated, leading to its proteasomal degradation. In terms of processing, O-glycosylated; contains O-GlcNAc. O-glycosylation by OGT prevents protein degradation by inhibiting ubiquitination. It also stabilizes the CLOCK-BMAL1 heterodimer thereby increasing CLOCK-BMAL1-mediated transcriptional activation of PER1/2/3 and CRY1/2. Phosphorylation is dependent on the CLOCK-BMAL1 heterodimer formation. Phosphorylation enhances the transcriptional activity, alters the subcellular localization and decreases the stability of the heterodimer by promoting its degradation. Phosphorylation shows circadian variations in the liver. May be phosphorylated by CSNK1D and CKSN1E. Post-translationally, sumoylation enhances its transcriptional activity and interaction with ESR1, resulting in up-regulation of ESR1 activity. Estrogen stimulates sumoylation. Desumoylation by SENP1 negatively regulates its transcriptional activity. Sumoylation stimulates cell proliferation and increases the proportion of S phase cells in breast cancer cell lines. In terms of processing, undergoes lysosome-mediated degradation in a time-dependent manner in the liver. As to expression, hair follicles (at protein level). Expressed in all tissues examined including spleen, thymus, prostate, testis, ovary, small intestine, colon, leukocytes, heart, brain, placenta, lung, liver, skeletal muscle, kidney and pancreas. Highest levels in testis and skeletal muscle. Low levels in thymus, lung and liver. Expressed in all brain regions with highest levels in cerebellum. Highly expressed in the suprachiasmatic nucleus (SCN).

The protein resides in the nucleus. It is found in the cytoplasm. The protein localises to the cytosol. It carries out the reaction L-lysyl-[protein] + acetyl-CoA = N(6)-acetyl-L-lysyl-[protein] + CoA + H(+). With respect to regulation, there is conflicting data about the effect of NAD cofactors on activity. PubMed:11441146 suggests that the redox state of the cell can modulate the transcriptional activity of the CLOCK-BMAL1 heterodimer; NADH and NADPH enhance the DNA-binding activity of the heterodimer. PubMed:23229515 reports that NADH and NADPH have no significant effect on DNA-binding activity of the CLOCK-BMAL1 heterodimer. Its function is as follows. Transcriptional activator which forms a core component of the circadian clock. The circadian clock, an internal time-keeping system, regulates various physiological processes through the generation of approximately 24 hour circadian rhythms in gene expression, which are translated into rhythms in metabolism and behavior. It is derived from the Latin roots 'circa' (about) and 'diem' (day) and acts as an important regulator of a wide array of physiological functions including metabolism, sleep, body temperature, blood pressure, endocrine, immune, cardiovascular, and renal function. Consists of two major components: the central clock, residing in the suprachiasmatic nucleus (SCN) of the brain, and the peripheral clocks that are present in nearly every tissue and organ system. Both the central and peripheral clocks can be reset by environmental cues, also known as Zeitgebers (German for 'timegivers'). The predominant Zeitgeber for the central clock is light, which is sensed by retina and signals directly to the SCN. The central clock entrains the peripheral clocks through neuronal and hormonal signals, body temperature and feeding-related cues, aligning all clocks with the external light/dark cycle. Circadian rhythms allow an organism to achieve temporal homeostasis with its environment at the molecular level by regulating gene expression to create a peak of protein expression once every 24 hours to control when a particular physiological process is most active with respect to the solar day. Transcription and translation of core clock components (CLOCK, NPAS2, BMAL1, BMAL2, PER1, PER2, PER3, CRY1 and CRY2) plays a critical role in rhythm generation, whereas delays imposed by post-translational modifications (PTMs) are important for determining the period (tau) of the rhythms (tau refers to the period of a rhythm and is the length, in time, of one complete cycle). A diurnal rhythm is synchronized with the day/night cycle, while the ultradian and infradian rhythms have a period shorter and longer than 24 hours, respectively. Disruptions in the circadian rhythms contribute to the pathology of cardiovascular diseases, cancer, metabolic syndromes and aging. A transcription/translation feedback loop (TTFL) forms the core of the molecular circadian clock mechanism. Transcription factors, CLOCK or NPAS2 and BMAL1 or BMAL2, form the positive limb of the feedback loop, act in the form of a heterodimer and activate the transcription of core clock genes and clock-controlled genes (involved in key metabolic processes), harboring E-box elements (5'-CACGTG-3') within their promoters. The core clock genes: PER1/2/3 and CRY1/2 which are transcriptional repressors form the negative limb of the feedback loop and interact with the CLOCK|NPAS2-BMAL1|BMAL2 heterodimer inhibiting its activity and thereby negatively regulating their own expression. This heterodimer also activates nuclear receptors NR1D1/2 and RORA/B/G, which form a second feedback loop and which activate and repress BMAL1 transcription, respectively. Regulates the circadian expression of ICAM1, VCAM1, CCL2, THPO and MPL and also acts as an enhancer of the transactivation potential of NF-kappaB. Plays an important role in the homeostatic regulation of sleep. The CLOCK-BMAL1 heterodimer regulates the circadian expression of SERPINE1/PAI1, VWF, B3, CCRN4L/NOC, NAMPT, DBP, MYOD1, PPARGC1A, PPARGC1B, SIRT1, GYS2, F7, NGFR, GNRHR, BHLHE40/DEC1, ATF4, MTA1, KLF10 and also genes implicated in glucose and lipid metabolism. Promotes rhythmic chromatin opening, regulating the DNA accessibility of other transcription factors. The CLOCK-BMAL2 heterodimer activates the transcription of SERPINE1/PAI1 and BHLHE40/DEC1. The preferred binding motif for the CLOCK-BMAL1 heterodimer is 5'-CACGTGA-3', which contains a flanking adenine nucleotide at the 3-prime end of the canonical 6-nucleotide E-box sequence. CLOCK specifically binds to the half-site 5'-CAC-3', while BMAL1 binds to the half-site 5'-GTGA-3'. The CLOCK-BMAL1 heterodimer also recognizes the non-canonical E-box motifs 5'-AACGTGA-3' and 5'-CATGTGA-3'. CLOCK has an intrinsic acetyltransferase activity, which enables circadian chromatin remodeling by acetylating histones and nonhistone proteins, including its own partner BMAL1. Represses glucocorticoid receptor NR3C1/GR-induced transcriptional activity by reducing the association of NR3C1/GR to glucocorticoid response elements (GREs) via the acetylation of multiple lysine residues located in its hinge region. The acetyltransferase activity of CLOCK is as important as its transcription activity in circadian control. Acetylates metabolic enzymes IMPDH2 and NDUFA9 in a circadian manner. Facilitated by BMAL1, rhythmically interacts and acetylates argininosuccinate synthase 1 (ASS1) leading to enzymatic inhibition of ASS1 as well as the circadian oscillation of arginine biosynthesis and subsequent ureagenesis. Drives the circadian rhythm of blood pressure through transcriptional activation of ATP1B1. This is Circadian locomoter output cycles protein kaput (CLOCK) from Homo sapiens (Human).